We begin with the raw amino-acid sequence, 170 residues long: Cathelicidin antimicrobial peptide (170 aa).

Residues 1–30 (MKTQRDSPSLGRWSLVLLLLGLVMPLAIVA) form the signal peptide. A propeptide spans 31 to 131 (QVLSYQEAVL…DISCDKDNRR (101 aa)) (cathelin-like domain (CLD)). Cystine bridges form between Cys-86-Cys-97 and Cys-108-Cys-125. The active core stretch occupies residues 150 to 162 (LKKVGQKIKDFLG).

It belongs to the cathelicidin family. Monomer, homodimer or homotrimer (in vitro). Oligomerizes as tetra- or hexamer in solution (in vitro). Post-translationally, proteolytically cleaved by proteinase PRTN3 into antibacterial peptide LL-37. Proteolytically cleaved by cathepsin CTSG and neutrophil elastase ELANE. Resistant to proteolytic degradation in solution, and when bound to both zwitterionic (mimicking mammalian membranes) and negatively charged membranes (mimicking bacterial membranes). In terms of processing, after secretion onto the skin surface, the CAMP gene product is processed by a serine protease-dependent mechanism into multiple novel antimicrobial peptides distinct from and shorter than cathelicidin LL-37. These peptides show enhanced antimicrobial action, acquiring the ability to kill skin pathogens such as S.aureus, E.coli and C.albicans. These peptides have lost the ability to stimulate CXCL8/IL8 release from keratinocytes. The peptides act synergistically, killing bacteria at lower concentrations when present together, and maintain activity at increased salt condition.

It localises to the secreted. The protein resides in the vesicle. In terms of biological role, antimicrobial protein that is an integral component of the innate immune system. Binds to bacterial lipopolysaccharides (LPS). Acts via neutrophil N-formyl peptide receptors to enhance the release of CXCL2. Postsecretory processing generates multiple cathelicidin antimicrobial peptides with various lengths which act as a topical antimicrobial defense in sweat on skin. The unprocessed precursor form, cathelicidin antimicrobial peptide, inhibits the growth of Gram-negative E.coli and E.aerogenes with efficiencies comparable to that of the mature peptide LL-37 (in vitro). Its function is as follows. Antimicrobial peptide that is an integral component of the innate immune system. Binds to bacterial lipopolysaccharides (LPS). Causes membrane permeabilization by forming transmembrane pores (in vitro). Causes lysis of E.coli. Exhibits antimicrobial activity against Gram-negative bacteria such as P.aeruginosa, S.typhimurium, E.aerogenes, E.coli and P.syringae, Gram-positive bacteria such as L.monocytogenes, S.epidermidis, S.pyogenes and S.aureus, as well as vancomycin-resistant enterococci (in vitro). Exhibits antimicrobial activity against methicillin-resistant S.aureus, P.mirabilis, and C.albicans in low-salt media, but not in media containing 100 mM NaCl (in vitro). Forms chiral supramolecular assemblies with quinolone signal (PQS) molecules of P.aeruginosa, which may lead to interference of bacterial quorum signaling and perturbance of bacterial biofilm formation. May form supramolecular fiber-like assemblies on bacterial membranes. Induces cytokine and chemokine producation as well as TNF/TNFA and CSF2/GMCSF production in normal human keratinocytes. Exhibits hemolytic activity against red blood cells. Exhibits antimicrobial activity against E.coli and B.megaterium (in vitro). This Macaca fascicularis (Crab-eating macaque) protein is Cathelicidin antimicrobial peptide.